Here is a 543-residue protein sequence, read N- to C-terminus: Chaperonin GroEL (543 aa).

Residues 29-32 (TLGP), Lys50, 86-90 (DGTTT), Gly413, 480-482 (NAA), and Asp496 each bind ATP. Residues 524–543 (EKPEKKESTPASAGAGDMDF) are disordered.

The protein belongs to the chaperonin (HSP60) family. Forms a cylinder of 14 subunits composed of two heptameric rings stacked back-to-back. Interacts with the co-chaperonin GroES.

It localises to the cytoplasm. The enzyme catalyses ATP + H2O + a folded polypeptide = ADP + phosphate + an unfolded polypeptide.. Together with its co-chaperonin GroES, plays an essential role in assisting protein folding. The GroEL-GroES system forms a nano-cage that allows encapsulation of the non-native substrate proteins and provides a physical environment optimized to promote and accelerate protein folding. The chain is Chaperonin GroEL from Thermus thermophilus (strain ATCC BAA-163 / DSM 7039 / HB27).